A 122-amino-acid chain; its full sequence is Large ribosomal subunit protein uL18 (122 aa).

Residues 1–27 (MSNLSRKQQTQKRHRRLRRHLNGTAQR) form a disordered region. Residues 9-21 (QTQKRHRRLRRHL) are compositionally biased toward basic residues.

This sequence belongs to the universal ribosomal protein uL18 family. In terms of assembly, part of the 50S ribosomal subunit; part of the 5S rRNA/L5/L18/L25 subcomplex. Contacts the 5S and 23S rRNAs.

This is one of the proteins that bind and probably mediate the attachment of the 5S RNA into the large ribosomal subunit, where it forms part of the central protuberance. This chain is Large ribosomal subunit protein uL18, found in Prochlorococcus marinus (strain MIT 9303).